Consider the following 654-residue polypeptide: Endoplasmic reticulum chaperone BiP (654 aa).

The signal sequence occupies residues 1-18 (MKLSLVAAMLLLLSAARA). The tract at residues 1-80 (MKLSLVAAML…EGERLIGDAA (80 aa)) is required for interaction with ELAPOR1. 36-39 (GTTY) is an ATP binding site. The residue at position 86 (S86) is a Phosphoserine. K96 lines the ATP pocket. K125 is modified (N6-acetyllysine). The segment at 125 to 280 (KPYIQVDIGG…KKKTGKDVRK (156 aa)) is nucleotide-binding (NBD). The residue at position 160 (Y160) is a 3'-nitrotyrosine. K213 carries the post-translational modification N6-acetyllysine. 227-229 (GGT) contacts ATP. An N6-acetyllysine modification is found at K271. Residue 293 to 300 (EKAKRALS) coordinates ATP. K326 carries the N6-acetyllysine modification. Residue K352 forms a Glycyl lysine isopeptide (Lys-Gly) (interchain with G-Cter in SUMO2) linkage. K353 is subject to N6-acetyllysine; alternate. K353 is covalently cross-linked (Glycyl lysine isopeptide (Lys-Gly) (interchain with G-Cter in SUMO1); alternate). ATP is bound at residue 364-367 (GSTR). Residues 409–419 (QDTGDLVLLDV) form an interdomain linker region. The substrate-binding (SBD) stretch occupies residues 420–500 (CPLTLGIETV…PRGVPQIEVT (81 aa)). The residue at position 447 (K447) is an N6-succinyllysine. Residue R492 is modified to Omega-N-methylarginine. An O-AMP-threonine; alternate modification is found at T518. Phosphothreonine; alternate is present on T518. At K585 the chain carries N6,N6,N6-trimethyllysine; by METTL21A; in vitro. Position 585 is an N6,N6-dimethyllysine; alternate (K585). Residue K585 is modified to N6-methyllysine; alternate. K591 is modified (N6-methyllysine). A disordered region spans residues 633–654 (KLYGSAGPPPTGEEDTAEKDEL). A phosphothreonine mark is found at T643 and T648. Residues 644–654 (GEEDTAEKDEL) show a composition bias toward acidic residues. The Prevents secretion from ER motif lies at 651–654 (KDEL).

The protein belongs to the heat shock protein 70 family. Monomer and homooligomer; homooligomerization via the interdomain linker inactivates the chaperone activity and acts as a storage of HSPA5/BiP molecules. Interacts with DNAJC1 (via J domain). Component of an EIF2 complex at least composed of CELF1/CUGBP1, CALR, CALR3, EIF2S1, EIF2S2, HSP90B1 and HSPA5. Part of a large chaperone multiprotein complex comprising DNAJB11, HSP90B1, HSPA5, HYOU, PDIA2, PDIA4, PDIA6, PPIB, SDF2L1, UGGT1 and very small amounts of ERP29, but not, or at very low levels, CALR nor CANX. Interacts with TMEM132A and TRIM21. May form a complex with ERLEC1, OS9, SEL1L and SYVN1. Interacts with DNAJC10. Interacts with DNAJB9/ERdj4; leading to recruit HSPA5/BiP to ERN1/IRE1. Interacts with ERN1/IRE1 (via luminal domain); the interaction takes place following interaction with DNAJB9/ERdj4 and leads to inactivate ERN1/IRE1, the interaction also competitively inhibits ERN1 interaction with MANF. Interacts directly with MANF (via SAP domain); the interaction inhibits ATP binding to HSPA5/BiP and subsequent nucleotide exchange. Interacts with EIF2AK3/PERK (via luminal domain); interaction leads to inactivate EIF2AK3/PERK. Interacts with MX1. Interacts with METTL23. Interacts with CEMIP; the interaction induces calcium leakage from the endoplasmic reticulum and cell migration. Interacts with PCSK4 form; the interaction takes place in the endoplasmic reticulum. Interacts with CIPC. Interacts with CCDC88B (via C-terminus); the interaction opposes ERN1-mediated JNK activation, protecting against apoptosis. Interacts with INPP5K; necessary for INPP5K localization at the endoplasmic reticulum. Interacts with MANF; the interaction is direct. Interacts with LOXL2; leading to activate the ERN1/IRE1-XBP1 pathway of the unfolded protein response. Interacts with CLU under stressed condition; interaction increases CLU protein stability; facilitates its retrotranslocation and redistribution to the mitochondria; cooperatively suppress stress-induced apoptosis by stabilizing mitochondrial membrane integrity. Interacts with CCDC47. Interacts with CLN3. Interacts with ELAPOR1; may regulate the function of HSPA5 in apoptosis and cell proliferation. Interacts with CASP7. Interacts with ILDR2; the interaction stabilizes ILDR2 expression. Interacts with ADAM7. In terms of assembly, (Microbial infection) Interacts with Japanese encephalitis virus envelope protein E. As to quaternary structure, (Microbial infection) Interacts with R.delemar invasin CotH3 on the surface of nasal epithelial cells. Interacts with R.delemar invasin CotH2. (Microbial infection) Interacts with Zika virus envelope protein E and non-structural protein 1 in a chaperone-client manner. Post-translationally, AMPylated by FICD. In unstressed cells, AMPylation at Thr-518 by FICD inactivates the chaperome activity: AMPylated form is locked in a relatively inert state and only weakly stimulated by J domain-containing proteins. In response to endoplasmic reticulum stress, de-AMPylation by the same protein, FICD, restores the chaperone activity.

Its subcellular location is the endoplasmic reticulum lumen. The protein localises to the melanosome. It is found in the cytoplasm. The protein resides in the cell surface. It catalyses the reaction ATP + H2O = ADP + phosphate + H(+). The chaperone activity is regulated by ATP-induced allosteric coupling of the nucleotide-binding (NBD) and substrate-binding (SBD) domains. In the ADP-bound and nucleotide-free (apo) states, the two domains have little interaction. In contrast, in the ATP-bound state the two domains are tightly coupled, which results in drastically accelerated kinetics in both binding and release of polypeptide substrates. J domain-containing co-chaperones (DNAJB9/ERdj4 or DNAJC10/ERdj5) stimulate the ATPase activity and are required for efficient substrate recognition by HSPA5/BiP. Homooligomerization inactivates participating HSPA5/BiP protomers and probably act as reservoirs to store HSPA5/BiP molecules when they are not needed by the cell. Endoplasmic reticulum chaperone that plays a key role in protein folding and quality control in the endoplasmic reticulum lumen. Involved in the correct folding of proteins and degradation of misfolded proteins via its interaction with DNAJC10/ERdj5, probably to facilitate the release of DNAJC10/ERdj5 from its substrate. Acts as a key repressor of the EIF2AK3/PERK and ERN1/IRE1-mediated unfolded protein response (UPR). In the unstressed endoplasmic reticulum, recruited by DNAJB9/ERdj4 to the luminal region of ERN1/IRE1, leading to disrupt the dimerization of ERN1/IRE1, thereby inactivating ERN1/IRE1. Also binds and inactivates EIF2AK3/PERK in unstressed cells. Accumulation of misfolded protein in the endoplasmic reticulum causes release of HSPA5/BiP from ERN1/IRE1 and EIF2AK3/PERK, allowing their homodimerization and subsequent activation. Plays an auxiliary role in post-translational transport of small presecretory proteins across endoplasmic reticulum (ER). May function as an allosteric modulator for SEC61 channel-forming translocon complex, likely cooperating with SEC62 to enable the productive insertion of these precursors into SEC61 channel. Appears to specifically regulate translocation of precursors having inhibitory residues in their mature region that weaken channel gating. May also play a role in apoptosis and cell proliferation. In terms of biological role, (Microbial infection) Plays an important role in viral binding to the host cell membrane and entry for several flaviruses such as Dengue virus, Zika virus and Japanese encephalitis virus. Acts as a component of the cellular receptor for Dengue virus serotype 2/DENV-2 on human liver cells. Functionally, (Microbial infection) Acts as a receptor for CotH proteins expressed by fungi of the order mucorales, the causative agent of mucormycosis, which plays an important role in epithelial cell invasion by the fungi. Acts as a receptor for R.delemar CotH3 in nasal epithelial cells, which may be an early step in rhinoorbital/cerebral mucormycosis (RCM) disease progression. In Homo sapiens (Human), this protein is Endoplasmic reticulum chaperone BiP.